Consider the following 100-residue polypeptide: Urease subunit gamma (100 aa).

This sequence belongs to the urease gamma subunit family. As to quaternary structure, heterotrimer of UreA (gamma), UreB (beta) and UreC (alpha) subunits. Three heterotrimers associate to form the active enzyme.

It localises to the cytoplasm. It carries out the reaction urea + 2 H2O + H(+) = hydrogencarbonate + 2 NH4(+). It functions in the pathway nitrogen metabolism; urea degradation; CO(2) and NH(3) from urea (urease route): step 1/1. This Ruegeria sp. (strain TM1040) (Silicibacter sp.) protein is Urease subunit gamma.